The primary structure comprises 60 residues: Large ribosomal subunit protein bL32 (60 aa).

This sequence belongs to the bacterial ribosomal protein bL32 family.

The chain is Large ribosomal subunit protein bL32 (rpmF) from Thermotoga maritima (strain ATCC 43589 / DSM 3109 / JCM 10099 / NBRC 100826 / MSB8).